Consider the following 70-residue polypeptide: MTTKITGLVKWFNPEKGFGFITPKDGSKDVFVHFSAIQSNEFRTLNENQEVEFSVEQGPKGPSAVNVVAL.

The CSD domain maps to 7–67 (GLVKWFNPEK…GPKGPSAVNV (61 aa)).

Its subcellular location is the cytoplasm. The polypeptide is Cold shock-like protein CspJ (cspJ) (Salmonella typhimurium (strain SL1344)).